Here is a 216-residue protein sequence, read N- to C-terminus: Ribosomal RNA large subunit methyltransferase E (216 aa).

Residues G67, W69, D87, D103, and D128 each coordinate S-adenosyl-L-methionine. The active-site Proton acceptor is the K168.

This sequence belongs to the class I-like SAM-binding methyltransferase superfamily. RNA methyltransferase RlmE family.

The protein resides in the cytoplasm. The enzyme catalyses uridine(2552) in 23S rRNA + S-adenosyl-L-methionine = 2'-O-methyluridine(2552) in 23S rRNA + S-adenosyl-L-homocysteine + H(+). In terms of biological role, specifically methylates the uridine in position 2552 of 23S rRNA at the 2'-O position of the ribose in the fully assembled 50S ribosomal subunit. The sequence is that of Ribosomal RNA large subunit methyltransferase E from Acinetobacter baumannii (strain AB307-0294).